The sequence spans 100 residues: Large ribosomal subunit protein uL23 (100 aa).

The protein belongs to the universal ribosomal protein uL23 family. In terms of assembly, part of the 50S ribosomal subunit. Contacts protein L29, and trigger factor when it is bound to the ribosome.

Functionally, one of the early assembly proteins it binds 23S rRNA. One of the proteins that surrounds the polypeptide exit tunnel on the outside of the ribosome. Forms the main docking site for trigger factor binding to the ribosome. The chain is Large ribosomal subunit protein uL23 from Vibrio campbellii (strain ATCC BAA-1116).